The following is a 386-amino-acid chain: Protein phosphatase methylesterase 1 (386 aa).

The segment at 1–38 (MSALEKSMHLGRLPSRPPLPGSGGSQSGAKMRMGPGRK) is disordered. Position 15 is a phosphoserine (S15). At R16 the chain carries Asymmetric dimethylarginine; alternate. R16 carries the omega-N-methylarginine; alternate modification. S156 is an active-site residue. Residues 255 to 265 (IEEEEEDEEGS) show a composition bias toward acidic residues. The tract at residues 255–280 (IEEEEEDEEGSESVNKRKKEDDMETK) is disordered. Residues 268–280 (VNKRKKEDDMETK) are compositionally biased toward basic and acidic residues. Residue H349 is part of the active site.

The protein belongs to the AB hydrolase superfamily. Binds PPP2CA and PPP2CB. Post-translationally, phosphorylated by SIK1 following increases in intracellular sodium, leading to dissociation from the protein phosphatase 2A (PP2A) complex and subsequent dephosphorylation of sodium/potassium-transporting ATPase ATP1A1.

The catalysed reaction is [phosphatase 2A protein]-C-terminal L-leucine methyl ester + H2O = [phosphatase 2A protein]-C-terminal L-leucine + methanol + H(+). Demethylates proteins that have been reversibly carboxymethylated. Demethylates PPP2CB (in vitro) and PPP2CA. Binding to PPP2CA displaces the manganese ion and inactivates the enzyme. This chain is Protein phosphatase methylesterase 1 (Ppme1), found in Rattus norvegicus (Rat).